Reading from the N-terminus, the 304-residue chain is Iron(III) enterobactin esterase (304 aa).

The N-terminal stretch at 1–25 (MRTSLLVAALGLALAAALPGGAPLA) is a signal peptide. Active-site charge relay system residues include Ser182, Glu242, and His283.

This sequence belongs to the esterase D family. In terms of assembly, monomer.

It localises to the periplasm. The enzyme catalyses Fe(III)-enterobactin + 3 H2O + H(+) = Fe(III)-[N-(2,3-dihydroxybenzoyl)-L-serine] + 2 N-(2,3-dihydroxybenzoyl)-L-serine. It carries out the reaction Fe(III)-enterobactin + H2O = Fe(III)-[N-(2,3-dihydroxybenzoyl)-L-serine]3 + H(+). The catalysed reaction is Fe(III)-[N-(2,3-dihydroxybenzoyl)-L-serine]3 + H2O + H(+) = Fe(III)-[N-(2,3-dihydroxybenzoyl)-L-serine]2 + N-(2,3-dihydroxybenzoyl)-L-serine. It catalyses the reaction Fe(III)-[N-(2,3-dihydroxybenzoyl)-L-serine]2 + H2O + H(+) = Fe(III)-[N-(2,3-dihydroxybenzoyl)-L-serine] + N-(2,3-dihydroxybenzoyl)-L-serine. Its function is as follows. Catalyzes the hydrolysis of ferric enterobactin (Fe-Ent). Hydrolyzes Fe-Ent into three molecules of 2,3-dihydroxybenzoylserine (DHBS) still complexed with ferric iron. Iron reduction is necessary to obtain complete release of the metal from DHBS. It can hydrolyze salmochelin S4 (diglucosyl-C-Ent) but is not involved in iron acquisition by this siderophore. In Pseudomonas aeruginosa (strain ATCC 15692 / DSM 22644 / CIP 104116 / JCM 14847 / LMG 12228 / 1C / PRS 101 / PAO1), this protein is Iron(III) enterobactin esterase.